The chain runs to 459 residues: N-chimaerin (459 aa).

Ala2 carries the N-acetylalanine modification. The SH2 domain maps to 49–135 (EYHGMISREE…IETKAAEYIA (87 aa)). Phosphothreonine is present on Thr192. A Phorbol-ester/DAG-type zinc finger spans residues 205–255 (VHNFKVHTFRGPHWCEYCANFMWGLIAQGVKCADCGLNVHKQCSKMVPNDC). The 192-residue stretch at 268–459 (CDLTTLVKAH…LLIKNEDILF (192 aa)) folds into the Rho-GAP domain. Residue Thr340 is modified to Phosphothreonine.

Interacts with EPHA4; effector of EPHA4 in axon guidance linking EPHA4 activation to RAC1 regulation. May also interact with EPHB1 and EPHB2. In terms of processing, phosphorylated. Phosphorylation is EPHA4 kinase activity-dependent.

Functionally, GTPase-activating protein for p21-rac and a phorbol ester receptor. May play an important role in neuronal signal-transduction mechanisms. Involved in the assembly of neuronal locomotor circuits as a direct effector of EPHA4 in axon guidance. The sequence is that of N-chimaerin (Chn1) from Mus musculus (Mouse).